The chain runs to 674 residues: Pesticidal crystal protein Cry24Aa (674 aa).

This sequence belongs to the delta endotoxin family.

In terms of biological role, promotes colloidosmotic lysis by binding to the midgut epithelial cells of insects. In Bacillus thuringiensis subsp. jegathesan, this protein is Pesticidal crystal protein Cry24Aa (cry24Aa).